The following is a 689-amino-acid chain: MGIWKKLTLLLLLLLLVGLGQPPWPAAMALALRWFLGDPTCLVLLGLALLGRPWISSWMPHWLSLVGAALTLFLLPLQPPPGLRWLHKDVAFTFKMLFYGLKFRRRLNKHPPETFVDALERQALAWPDRVALVCTGSEGSSITNSQLDARSCQAAWVLKAKLKDAVIQNTRDAAAILVLPSKTISALSVFLGLAKLGCPVAWINPHSRGMPLLHSVRSSGASVLIVDPDLQENLEEVLPKLLAENIHCFYLGHSSPTPGVEALGASLDAAPSDPVPASLRATIKWKSPAIFIFTSGTTGLPKPAILSHERVIQVSNVLSFCGCRADDVVYDVLPLYHTIGLVLGFLGCLQVGATCVLAPKFSASRFWAECRQHGVTVILYVGEILRYLCNVPEQPEDKIHTVRLAMGNGLRANVWKNFQQRFGPIRIWEFYGSTEGNVGLMNYVGHCGAVGRTSCILRMLTPFELVQFDIETAEPLRDKQGFCIPVEPGKPGLLLTKVRKNQPFLGYRGSQAESNRKLVANVRRVGDLYFNTGDVLTLDQEGFFYFQDRLGDTFRWKGENVSTGEVECVLSSLDFLEEVNVYGVPVPGCEGKVGMAAVKLAPGKTFDGQKLYQHVRSWLPAYATPHFIRIQDSLEITNTYKLVKSRLVREGFDVGIIADPLYILDNKAQTFRSLMPDVYQAVCEGTWNL.

The Cytoplasmic segment spans residues 1–29; the sequence is MGIWKKLTLLLLLLLLVGLGQPPWPAAMA. The next 2 helical transmembrane spans lie at 30-50 and 55-75; these read LALR…LALL and ISSW…LFLL. Residues 76-689 are Cytoplasmic-facing; sequence PLQPPPGLRW…QAVCEGTWNL (614 aa). 292-303 provides a ligand contact to AMP; the sequence is IFTSGTTGLPKP.

Belongs to the ATP-dependent AMP-binding enzyme family. As to expression, liver-specific (at protein level). In liver expressed in a periportal distribution.

It is found in the endoplasmic reticulum membrane. Its subcellular location is the microsome. The protein localises to the cell membrane. It catalyses the reaction a fatty acid(in) = a fatty acid(out). It carries out the reaction cholate + ATP + CoA = choloyl-CoA + AMP + diphosphate. The enzyme catalyses (25R)-3alpha,7alpha,12alpha-trihydroxy-5beta-cholestan-26-oate + ATP + CoA = (25R)-3alpha,7alpha,12alpha-trihydroxy-5beta-cholestan-26-oyl-CoA + AMP + diphosphate. The catalysed reaction is chenodeoxycholate + ATP + CoA = chenodeoxycholoyl-CoA + AMP + diphosphate. It catalyses the reaction deoxycholate + ATP + CoA = deoxycholoyl-CoA + AMP + diphosphate. It carries out the reaction lithocholate + ATP + CoA = lithocholoyl-CoA + AMP + diphosphate. The enzyme catalyses a very long-chain fatty acid + ATP + CoA = a very long-chain fatty acyl-CoA + AMP + diphosphate. The catalysed reaction is tetracosanoate + ATP + CoA = tetracosanoyl-CoA + AMP + diphosphate. It catalyses the reaction hexacosanoate + ATP + CoA = hexacosanoyl-CoA + AMP + diphosphate. It carries out the reaction a long-chain fatty acid + ATP + CoA = a long-chain fatty acyl-CoA + AMP + diphosphate. The enzyme catalyses octadecanoate + ATP + CoA = octadecanoyl-CoA + AMP + diphosphate. The catalysed reaction is eicosanoate + ATP + CoA = eicosanoyl-CoA + AMP + diphosphate. Functionally, mediates the import of long-chain fatty acids (LCFA) by facilitating their transport across cell membranes. Also catalyzes the ATP-dependent formation of fatty acyl-CoA using LCFA and very-long-chain fatty acids (VLCFA) as substrates. Mainly functions as a bile acyl-CoA synthetase catalyzing the activation of bile acids via ATP-dependent formation of bile acid CoA thioesters which is necessary for their subsequent conjugation with glycine or taurine. Both primary bile acids (cholic acid and chenodeoxycholic acid) and secondary bile acids (deoxycholic acid and lithocholic acid) are the principal substrates. In vitro, activates 3-alpha,7-alpha,12-alpha-trihydroxy-5-beta-cholestanate ((25R)-3alpha,7alpha,12alpha-trihydroxy-5beta-cholestan-26-oate or THCA), the C27 precursor of cholic acid deriving from the de novo synthesis from cholesterol. Plays an important role in hepatic fatty acid uptake and bile acid reconjugation and recycling but not in de novo synthesis of bile acids. In Mus musculus (Mouse), this protein is Long-chain fatty acid transport protein 5 (Slc27a5).